We begin with the raw amino-acid sequence, 332 residues long: C4-dicarboxylate-binding periplasmic protein DctP (332 aa).

Residues 1 to 22 form the signal peptide; that stretch reads MFKPLTLIAASILAVTSFNAAA.

Belongs to the bacterial solute-binding protein 7 family. The complex comprises the extracytoplasmic solute receptor protein DctP, and the two transmembrane proteins DctQ and DctM.

It localises to the periplasm. Functionally, part of the tripartite ATP-independent periplasmic (TRAP) transport system DctPQM involved in C4-dicarboxylates uptake. This is C4-dicarboxylate-binding periplasmic protein DctP from Vibrio cholerae serotype O1 (strain ATCC 39315 / El Tor Inaba N16961).